The primary structure comprises 659 residues: tRNA (guanine(26)-N(2))-dimethyltransferase (659 aa).

A mitochondrion-targeting transit peptide spans 1-23 (MQGSSLWLSLTFRSARVLSRARF). Residues 55–499 (TTVTEGAAKI…APASALWDIM (445 aa)) enclose the Trm1 methyltransferase domain. Residue Arg-82 participates in S-adenosyl-L-methionine binding. Residue Ser-120 is modified to Phosphoserine. Residues Arg-166 and Asp-184 each coordinate S-adenosyl-L-methionine. The Zn(2+) site is built by Cys-348, Cys-351, Cys-384, and Cys-387. Ser-517 bears the Phosphoserine mark. 2 disordered regions span residues 537-578 (EDAN…AMEE) and 616-659 (RGDQ…PGID). The Nuclear localization signal motif lies at 543-575 (SRQRGLKRFQANPEANWGPRPRARPGGKAADEA). A C3H1-type zinc finger spans residues 600 to 627 (RLKTFPCKRFKEGTCQRGDQCCYSHSPP). A Phosphoserine modification is found at Ser-625. A phosphothreonine mark is found at Thr-628 and Thr-646.

This sequence belongs to the class I-like SAM-binding methyltransferase superfamily. Trm1 family. (Microbial infection) Cleaved between Gln-530 and Ala-531 by the 3C-like proteinase nsp5 from human coronavirus SARS-CoV-2, leading to its inactivation.

The protein resides in the mitochondrion. It is found in the nucleus. Its subcellular location is the cytoplasm. The catalysed reaction is guanosine(26) in tRNA + 2 S-adenosyl-L-methionine = N(2)-dimethylguanosine(26) in tRNA + 2 S-adenosyl-L-homocysteine + 2 H(+). Its function is as follows. Dimethylates a single guanine residue at position 26 of most nuclear- and mitochondrial-encoded tRNAs using S-adenosyl-L-methionine as donor of the methyl groups. tRNA guanine(26)-dimethylation is required for redox homeostasis and ensure proper cellular proliferation and oxidative stress survival. In Homo sapiens (Human), this protein is tRNA (guanine(26)-N(2))-dimethyltransferase.